Reading from the N-terminus, the 258-residue chain is Global transcriptional regulator CodY (258 aa).

A GAF domain region spans residues 1–156 (MSSLLTKTRM…SATIVGMEML (156 aa)). Residues 204 to 223 (ASKIADKVGITRSVIVNALR) constitute a DNA-binding region (H-T-H motif).

Belongs to the CodY family.

The protein resides in the cytoplasm. DNA-binding global transcriptional regulator which is involved in the adaptive response to starvation and acts by directly or indirectly controlling the expression of numerous genes in response to nutrient availability. During rapid exponential growth, CodY is highly active and represses genes whose products allow adaptation to nutrient depletion. This chain is Global transcriptional regulator CodY, found in Clostridium beijerinckii (strain ATCC 51743 / NCIMB 8052) (Clostridium acetobutylicum).